A 310-amino-acid polypeptide reads, in one-letter code: Ribosomal RNA small subunit methyltransferase H (310 aa).

Residues G33–H35, D52, F79, D98, and Q105 each bind S-adenosyl-L-methionine.

This sequence belongs to the methyltransferase superfamily. RsmH family.

The protein resides in the cytoplasm. It catalyses the reaction cytidine(1402) in 16S rRNA + S-adenosyl-L-methionine = N(4)-methylcytidine(1402) in 16S rRNA + S-adenosyl-L-homocysteine + H(+). Its function is as follows. Specifically methylates the N4 position of cytidine in position 1402 (C1402) of 16S rRNA. This is Ribosomal RNA small subunit methyltransferase H from Campylobacter jejuni subsp. jejuni serotype O:6 (strain 81116 / NCTC 11828).